We begin with the raw amino-acid sequence, 470 residues long: Light-independent protochlorophyllide reductase subunit N (470 aa).

3 residues coordinate [4Fe-4S] cluster: Cys-24, Cys-49, and Cys-109.

Belongs to the BchN/ChlN family. In terms of assembly, protochlorophyllide reductase is composed of three subunits; ChlL, ChlN and ChlB. Forms a heterotetramer of two ChlB and two ChlN subunits. It depends on [4Fe-4S] cluster as a cofactor.

It catalyses the reaction chlorophyllide a + oxidized 2[4Fe-4S]-[ferredoxin] + 2 ADP + 2 phosphate = protochlorophyllide a + reduced 2[4Fe-4S]-[ferredoxin] + 2 ATP + 2 H2O. The protein operates within porphyrin-containing compound metabolism; chlorophyll biosynthesis (light-independent). Its function is as follows. Component of the dark-operative protochlorophyllide reductase (DPOR) that uses Mg-ATP and reduced ferredoxin to reduce ring D of protochlorophyllide (Pchlide) to form chlorophyllide a (Chlide). This reaction is light-independent. The NB-protein (ChlN-ChlB) is the catalytic component of the complex. This chain is Light-independent protochlorophyllide reductase subunit N, found in Acaryochloris marina (strain MBIC 11017).